The following is a 244-amino-acid chain: 7-cyano-7-deazaguanine synthase (244 aa).

Residue 14–24 participates in ATP binding; sequence FSGGQDSATCV. The Zn(2+) site is built by cysteine 202, cysteine 217, cysteine 220, and cysteine 223.

It belongs to the QueC family. Zn(2+) is required as a cofactor.

The enzyme catalyses 7-carboxy-7-deazaguanine + NH4(+) + ATP = 7-cyano-7-deazaguanine + ADP + phosphate + H2O + H(+). Its pathway is purine metabolism; 7-cyano-7-deazaguanine biosynthesis. Its function is as follows. Catalyzes the ATP-dependent conversion of 7-carboxy-7-deazaguanine (CDG) to 7-cyano-7-deazaguanine (preQ(0)). This chain is 7-cyano-7-deazaguanine synthase, found in Burkholderia mallei (strain NCTC 10229).